The sequence spans 1466 residues: Retrovirus-related Pol polyprotein from transposon RE1 (1466 aa).

The tract at residues 227–270 (SHRNTTTTNNNNNGNRNNRYDNRNNNNNSKPWQQSSTNFHPNNN) is disordered. The span at 229-254 (RNTTTTNNNNNGNRNNRYDNRNNNNN) shows a compositional bias: low complexity. Over residues 255–270 (SKPWQQSSTNFHPNNN) the composition is skewed to polar residues. The CCHC-type zinc-finger motif lies at 278 to 294 (KCQICGVQGHSAKRCSQ). The active-site For protease activity is Asp334. The region spanning 519 to 682 (NSTRPLEYIY…SPFQKLFGTS (164 aa)) is the Integrase catalytic domain. Asp530 and Asp592 together coordinate Mg(2+). Positions 772-927 (WSPHTTLPTR…NNNQAPLNTH (156 aa)) are disordered. Low complexity-rich tracts occupy residues 796 to 827 (AATP…SFPS) and 836 to 898 (QNGP…SSTS). A compositionally biased stretch (pro residues) spans 899–912 (PTPPSILIHPPPPL). Residues 915-927 (IVNNNNQAPLNTH) are compositionally biased toward polar residues. The Reverse transcriptase Ty1/copia-type domain occupies 982–1225 (NHTWDLVPPP…ITAKPVTTPM (244 aa)).

It carries out the reaction DNA(n) + a 2'-deoxyribonucleoside 5'-triphosphate = DNA(n+1) + diphosphate. This Arabidopsis thaliana (Mouse-ear cress) protein is Retrovirus-related Pol polyprotein from transposon RE1 (RE1).